A 185-amino-acid chain; its full sequence is Mu-like prophage FluMu protein gp16 (185 aa).

To phage Mu protein gp16.

This is Mu-like prophage FluMu protein gp16 from Haemophilus influenzae (strain ATCC 51907 / DSM 11121 / KW20 / Rd).